We begin with the raw amino-acid sequence, 1499 residues long: Rho GTPase-activating protein 35 (1499 aa).

The segment at 1-266 (MMMARKQDVR…IPYFEALKQQ (266 aa)) is has GTPase activity, required for proper localization. Residues Lys28, 33 to 37 (IGKSC), Leu52, Ser56, 95 to 97 (EQT), 201 to 203 (KCD), and 229 to 231 (SAR) each bind GTP. 4 consecutive FF domains span residues 270-327 (IATA…HIHR), 368-422 (KLLE…HLEK), 429-483 (RAEM…HQKQ), and 485-550 (IDRA…HIHF). Tyr308 carries the phosphotyrosine modification. Ser589 is modified (phosphoserine). One can recognise a pG1 pseudoGTPase domain in the interval 592-767 (DPNIDRINLV…LLDSKRNLNL (176 aa)). A phosphoserine mark is found at Ser770 and Ser773. In terms of domain architecture, pG2 pseudoGTPase spans 783 to 947 (RIVMCLMCGD…FKDVVEKKNI (165 aa)). A phosphoserine mark is found at Ser970, Ser975, Ser985, and Ser1072. Tyr1087 carries the post-translational modification Phosphotyrosine. Tyr1105 is subject to Phosphotyrosine; by ABL2 and PTK6. Polar residues predominate over residues 1124–1141 (KAQSNGSGNGSDSEMDTS). Residues 1124–1148 (KAQSNGSGNGSDSEMDTSSLERGRK) are disordered. Ser1134, Ser1142, Ser1150, Ser1176, Ser1179, and Ser1221 each carry phosphoserine. Residues 1177–1207 (VGSDDELGPIRKKEEDQASQGYKGDNAVIPY) are disordered. Residues 1213-1236 (PRRRNILRSLRRNTKKPKPKPRPS) form a required for phospholipid binding and regulation of the substrate preference region. Residue Thr1226 is modified to Phosphothreonine. Ser1236 is subject to Phosphoserine. The Rho-GAP domain occupies 1249-1436 (VPLTTVVTPE…LFIQQCPFFF (188 aa)). The segment at 1446–1499 (GAAPGSPSAMAPTVPFLTSTPATSQPSPPQSPPPTPQSPMQPLLSSQLQAEHTL) is disordered. A compositionally biased stretch (low complexity) spans 1448–1470 (APGSPSAMAPTVPFLTSTPATSQ). Residues 1471–1484 (PSPPQSPPPTPQSP) are compositionally biased toward pro residues. 2 positions are modified to phosphoserine: Ser1472 and Ser1476. A Phosphothreonine modification is found at Thr1480. The residue at position 1483 (Ser1483) is a Phosphoserine. Positions 1485–1499 (MQPLLSSQLQAEHTL) are enriched in low complexity.

Interacts with RASA1. Interacts with the general transcription factor GTF2I, the interaction sequesters GTF2I in the cytoplasm. Phosphorylation of Tyr-1105 by PTK6 promotes the association with RASA1, inactivating RHOA while activating RAS. Phosphorylation at Tyr-308 by PDGFRA inhibits binding to GTF2I. Phosphorylated by PRKCA at Ser-1221 and Thr-1226, induces relocalization from the cytoplasm to regions of plasma membrane ruffling and prevents the binding and substrate specificity regulation by phospholipids. In brain, phosphorylated by FYN and SRC. During focal adhesion formation, phosphorylated by MAPK1 and MAPK3 at the C-terminal region, probably at Ser-1451, Ser-1476, Thr-1480 and Ser-1483. Phosphorylation by MAPK1 and MAPK3 inhibits GAP function and localizes ARGHAP35 away from newly forming focal adhesions and stress fibers in cells spreading on fibronectin. Phosphorylation at Ser-1476 and Thr-1480 by GSK3B requires priming by MAPK and inhibits RhoGAP activity and modulates polarized cell migration. In terms of tissue distribution, ubiquitously expressed.

The protein localises to the cytoplasm. The protein resides in the cytoskeleton. It localises to the cilium basal body. It is found in the nucleus. Its subcellular location is the cell membrane. Rho GTPase-activating protein (GAP). Binds several acidic phospholipids which inhibits the Rho GAP activity to promote the Rac GAP activity. This binding is inhibited by phosphorylation by PRKCA. Involved in cell differentiation as well as cell adhesion and migration, plays an important role in retinal tissue morphogenesis, neural tube fusion, midline fusion of the cerebral hemispheres and mammary gland branching morphogenesis. Transduces signals from p21-ras to the nucleus, acting via the ras GTPase-activating protein (GAP). Transduces SRC-dependent signals from cell-surface adhesion molecules, such as laminin, to promote neurite outgrowth. Regulates axon outgrowth, guidance and fasciculation. Modulates Rho GTPase-dependent F-actin polymerization, organization and assembly, is involved in polarized cell migration and in the positive regulation of ciliogenesis and cilia elongation. During mammary gland development, is required in both the epithelial and stromal compartments for ductal outgrowth. Represses transcription of the glucocorticoid receptor by binding to the cis-acting regulatory sequence 5'-GAGAAAAGAAACTGGAGAAACTC-3'; this function is however unclear and would need additional experimental evidences. This chain is Rho GTPase-activating protein 35, found in Rattus norvegicus (Rat).